The primary structure comprises 300 residues: Tetrahydromethanopterin S-methyltransferase subunit E (300 aa).

Helical transmembrane passes span 62 to 82 (PVSY…LMGM), 86 to 106 (PILA…AYSV), 135 to 155 (PIVG…YLAV), 158 to 178 (LGNP…VGAI), 226 to 246 (YFCS…IIFL), and 261 to 281 (LITK…TTLL).

This sequence belongs to the MtrE family. The complex is composed of 8 subunits; MtrA, MtrB, MtrC, MtrD, MtrE, MtrF, MtrG and MtrH.

It is found in the cell membrane. It catalyses the reaction 5-methyl-5,6,7,8-tetrahydromethanopterin + coenzyme M + 2 Na(+)(in) = 5,6,7,8-tetrahydromethanopterin + methyl-coenzyme M + 2 Na(+)(out). It functions in the pathway one-carbon metabolism; methanogenesis from CO(2); methyl-coenzyme M from 5,10-methylene-5,6,7,8-tetrahydromethanopterin: step 2/2. Part of a complex that catalyzes the formation of methyl-coenzyme M and tetrahydromethanopterin from coenzyme M and methyl-tetrahydromethanopterin. This is an energy-conserving, sodium-ion translocating step. This is Tetrahydromethanopterin S-methyltransferase subunit E from Methanococcus aeolicus (strain ATCC BAA-1280 / DSM 17508 / OCM 812 / Nankai-3).